The primary structure comprises 87 residues: Large ribosomal subunit protein bL27 (87 aa).

It belongs to the bacterial ribosomal protein bL27 family.

This Pseudarthrobacter chlorophenolicus (strain ATCC 700700 / DSM 12829 / CIP 107037 / JCM 12360 / KCTC 9906 / NCIMB 13794 / A6) (Arthrobacter chlorophenolicus) protein is Large ribosomal subunit protein bL27.